The following is a 591-amino-acid chain: Transcription factor COE1 (591 aa).

Position 1 is an N-acetylmethionine (Met1). Residues 1-14 are compositionally biased toward polar residues; that stretch reads MFGIQESIQRSGSS. The disordered stretch occupies residues 1–21; the sequence is MFGIQESIQRSGSSMKEEPLG. A Glycyl lysine isopeptide (Lys-Gly) (interchain with G-Cter in SUMO1); alternate cross-link involves residue Lys16. Lys16 participates in a covalent cross-link: Glycyl lysine isopeptide (Lys-Gly) (interchain with G-Cter in SUMO2); alternate. The interval 63 to 66 is interaction with DNA; that stretch reads RKSN. The C5-type zinc-finger motif lies at 151 to 170; the sequence is CRVLLTHEIMCSRCCDKKSC. Interaction with DNA regions lie at residues 197-204 and 236-239; these read NCLKNAGN and NNSK. The 84-residue stretch at 262–345 folds into the IPT/TIG domain; it reads PCIKAISPSE…KGTPGRFIYT (84 aa). Residues 457–480 form a disordered region; sequence GFTRNSSSVSPHGYVPSTTPQQTN.

This sequence belongs to the COE family. As to quaternary structure, homodimer. Interacts with ZNF423 and ZNF521, leading to prevent EBF1 to bind DNA and activate target genes. Interacts with CCR4-NOT component CNOT3. (Microbial infection) Interacts with Epstein-barr virus protein EBNA2.

It is found in the nucleus. Functionally, key pioneer transcription factor of B-cell specification and commitment. Recognizes variations of the palindromic sequence 5'-ATTCCCNNGGGAATT-3'. Operates in a transcription factor network to activate B-cell-specific genes and repress genes associated with alternative cell fates. For instance, positively regulates many B-cell specific genes including BCR or CD40 while repressing genes that direct cells into alternative lineages, including GATA3 and TCF7 for the T-cell lineage. In addition to its role during lymphopoiesis, controls the thermogenic gene program in adipocytes during development and in response to environmental cold. Its function is as follows. (Microbial infection) Acts as a chromatin anchor for Epstein-Barr virus EBNA2 to mediate the assembly of EBNA2 chromatin complexes in B-cells. In addition, binds to the viral LMP1 proximal promoter and promotes its expression during latency. The protein is Transcription factor COE1 (EBF1) of Homo sapiens (Human).